A 325-amino-acid chain; its full sequence is Putative gluconeogenesis factor (325 aa).

It belongs to the gluconeogenesis factor family.

The protein localises to the cytoplasm. Its function is as follows. Required for morphogenesis under gluconeogenic growth conditions. The polypeptide is Putative gluconeogenesis factor (Streptococcus pyogenes serotype M3 (strain ATCC BAA-595 / MGAS315)).